We begin with the raw amino-acid sequence, 484 residues long: Regulatory protein ViaA (484 aa).

The protein belongs to the ViaA family. As to quaternary structure, homodimer. Interacts with RavA.

The protein resides in the cytoplasm. Functionally, component of the RavA-ViaA chaperone complex, which may act on the membrane to optimize the function of some of the respiratory chains. ViaA stimulates the ATPase activity of RavA. This Edwardsiella ictaluri (strain 93-146) protein is Regulatory protein ViaA.